Reading from the N-terminus, the 1179-residue chain is ATP-dependent helicase/deoxyribonuclease subunit B (1179 aa).

This sequence belongs to the helicase family. AddB/RexB type 2 subfamily. As to quaternary structure, heterodimer of AddA and RexB. Mg(2+) is required as a cofactor.

Functionally, the heterodimer acts as both an ATP-dependent DNA helicase and an ATP-dependent, dual-direction single-stranded exonuclease. Recognizes the chi site generating a DNA molecule suitable for the initiation of homologous recombination. This subunit has 5' -&gt; 3' nuclease activity but not helicase activity. In Lactobacillus delbrueckii subsp. bulgaricus (strain ATCC BAA-365 / Lb-18), this protein is ATP-dependent helicase/deoxyribonuclease subunit B.